Reading from the N-terminus, the 566-residue chain is Sulfite reductase [NADPH] hemoprotein beta-component (566 aa).

The [4Fe-4S] cluster site is built by cysteine 430, cysteine 436, cysteine 475, and cysteine 479. Siroheme is bound at residue cysteine 479.

The protein belongs to the nitrite and sulfite reductase 4Fe-4S domain family. As to quaternary structure, alpha(8)-beta(8). The alpha component is a flavoprotein, the beta component is a hemoprotein. Siroheme serves as cofactor. Requires [4Fe-4S] cluster as cofactor.

The catalysed reaction is hydrogen sulfide + 3 NADP(+) + 3 H2O = sulfite + 3 NADPH + 4 H(+). The protein operates within sulfur metabolism; hydrogen sulfide biosynthesis; hydrogen sulfide from sulfite (NADPH route): step 1/1. Its function is as follows. Component of the sulfite reductase complex that catalyzes the 6-electron reduction of sulfite to sulfide. This is one of several activities required for the biosynthesis of L-cysteine from sulfate. This Baumannia cicadellinicola subsp. Homalodisca coagulata protein is Sulfite reductase [NADPH] hemoprotein beta-component.